Consider the following 603-residue polypeptide: Ribosome-inactivating protein PMRIPt (603 aa).

The signal sequence occupies residues 1–39 (MRVVAGILYIVVMAICGLGIQGGTLQDYPSVYFQDSTLQ). N74 and N168 each carry an N-linked (GlcNAc...) asparagine glycan. E208 is an active-site residue. Disulfide bonds link C297-C335, C351-C370, and C392-C409. 2 Ricin B-type lectin domains span residues 338-466 (GEPT…VGDD) and 467-593 (VEPI…WMTM). Residues 348-388 (DGLCMDVRNESNNDGIPIQLWPCGAQRNQQWTFHTDGTIQS) form a 1-alpha repeat. Residues N356 and N408 are each glycosylated (N-linked (GlcNAc...) asparagine). The 1-beta repeat unit spans residues 389–430 (MGKCMTSNGYHPGDYVMIFNCSTAPVPDATKWVVSIDGSITN). The 1-gamma repeat unit spans residues 433–466 (SGLVLTAPQAAQTTILLVVRNTHSAKQGRSVGDD). The 2-alpha repeat unit spans residues 478-516 (KYMCLQGNNENNTRVWLEDCAVDRPQQWWALYSDGTIRV). 2 disulfides stabilise this stretch: C481–C497 and C523–C540. N488 is a glycosylation site (N-linked (GlcNAc...) asparagine). The stretch at 520–558 (RSLCVTSDGHSSRDAIIILTCDGGINQRLVFNTDGTILN) is one 2-beta repeat. Residues 561-597 (AQLVMDVRQSNVALRQIILYQPTGNPNQQWMTMITRT) form a 2-gamma repeat.

Belongs to the ribosome-inactivating protein family. Type 2 RIP subfamily. Tetramer of four pairs of disulfide bound A-B chains. Post-translationally, the precursor is processed in two chains, A and B, that are linked by a disulfide bond. In terms of processing, glycosylated. In terms of tissue distribution, expressed in rhizome and more abundantly in leaves (at protein level).

The enzyme catalyses Endohydrolysis of the N-glycosidic bond at one specific adenosine on the 28S rRNA.. Its activity is regulated as follows. Strongly inhibited by asialofetuin and asialomucin. Functionally, galNAc-specific agglutinin. Behaves as a type-2 ribosome-inactivating protein. Inhibits mammalian ribosomes. The A chain is responsible for inhibiting protein synthesis through the catalytic inactivation of 60S ribosomal subunits by removing adenine from position 4,324 of 28S rRNA. The B chain binds to cell receptors and probably facilitates the entry into the cell of the A chain; B chains are also responsible for cell agglutination (lectin activity). Involved in plant defense against insects. Has very low cytotoxic activity against the human tumor cell lines CEM and Molt4. The chain is Ribosome-inactivating protein PMRIPt from Polygonatum multiflorum (Solomon's seal).